Here is a 954-residue protein sequence, read N- to C-terminus: Glycine dehydrogenase (decarboxylating) (954 aa).

At K704 the chain carries N6-(pyridoxal phosphate)lysine.

It belongs to the GcvP family. The glycine cleavage system is composed of four proteins: P, T, L and H. Requires pyridoxal 5'-phosphate as cofactor.

It catalyses the reaction N(6)-[(R)-lipoyl]-L-lysyl-[glycine-cleavage complex H protein] + glycine + H(+) = N(6)-[(R)-S(8)-aminomethyldihydrolipoyl]-L-lysyl-[glycine-cleavage complex H protein] + CO2. Functionally, the glycine cleavage system catalyzes the degradation of glycine. The P protein binds the alpha-amino group of glycine through its pyridoxal phosphate cofactor; CO(2) is released and the remaining methylamine moiety is then transferred to the lipoamide cofactor of the H protein. This Rhizobium etli (strain CIAT 652) protein is Glycine dehydrogenase (decarboxylating).